A 227-amino-acid polypeptide reads, in one-letter code: MFS-type transporter FVEG_08288 (227 aa).

A helical transmembrane segment spans residues 8–28; sequence VFLTVLIAIASCSVYILNIAI. Asn-40 carries N-linked (GlcNAc...) asparagine glycosylation. 5 consecutive transmembrane segments (helical) span residues 43-63, 100-120, 122-142, 164-181, and 188-208; these read TVGLAYMSTGIGYILSSMAGG, VANTLYPLSSLWFGWTMYYGV, FMVPISALFVFGFTLMLHFTL, FVRNILSCVGTIVAAPWM, and YMMTKLCIICLLLGSLGIWLI.

Belongs to the major facilitator superfamily.

The protein localises to the membrane. Its function is as follows. MFS-type transporter; part of the Fusarium detoxification of benzoxazolinone cluster 1 (FDB1) involved in the degradation of benzoxazolinones produced by the host plant. Maize, wheat, and rye produce the 2 benzoxazinone phytoanticipins 2,4-dihy-droxy-7-methoxy-1,4-benzoxazin-3-one (DIMBOA) and 2,4-dihydroxy-1,4-benzoxazin-3-one (DIBOA) that, due to their inherent instability once released, spontaneously degrade to the more stable corresponding benzoxazolinones, 6-methoxy-2-benzoxazolinone (MBOA) and 2-benzoxazolinone (BOA), respectively. The sequence is that of MFS-type transporter FVEG_08288 from Gibberella moniliformis (strain M3125 / FGSC 7600) (Maize ear and stalk rot fungus).